Consider the following 468-residue polypeptide: ATP synthase subunit beta (468 aa).

155–162 (GGAGVGKT) contacts ATP.

This sequence belongs to the ATPase alpha/beta chains family. F-type ATPases have 2 components, CF(1) - the catalytic core - and CF(0) - the membrane proton channel. CF(1) has five subunits: alpha(3), beta(3), gamma(1), delta(1), epsilon(1). CF(0) has three main subunits: a(1), b(2) and c(9-12). The alpha and beta chains form an alternating ring which encloses part of the gamma chain. CF(1) is attached to CF(0) by a central stalk formed by the gamma and epsilon chains, while a peripheral stalk is formed by the delta and b chains.

It localises to the cell membrane. The catalysed reaction is ATP + H2O + 4 H(+)(in) = ADP + phosphate + 5 H(+)(out). Produces ATP from ADP in the presence of a proton gradient across the membrane. The catalytic sites are hosted primarily by the beta subunits. The polypeptide is ATP synthase subunit beta (Enterococcus hirae (strain ATCC 9790 / DSM 20160 / JCM 8729 / LMG 6399 / NBRC 3181 / NCIMB 6459 / NCDO 1258 / NCTC 12367 / WDCM 00089 / R)).